Reading from the N-terminus, the 602-residue chain is T-box transcription factor TBX15 (602 aa).

Residues 43–95 are disordered; sequence SMEALSPAGPLGDTDDPATHGLEPHPDSEQSTGSDSEVLTERTSCSFSTHTDL. The span at 71–94 shows a compositional bias: polar residues; the sequence is EQSTGSDSEVLTERTSCSFSTHTD. Residues 122–304 constitute a DNA-binding region (T-box); that stretch reads LWKRFHDIGT…RNPFAKGFRD (183 aa). Threonine 330 bears the Phosphothreonine mark. Disordered stretches follow at residues 338–369 and 425–444; these read QKQQ…LSPS and QSGT…QRTP. Residues 346–369 are compositionally biased toward low complexity; sequence GTSPTTSSTGTPSPSASSHLLSPS.

Can form a heterodimer with TBX18.

Its subcellular location is the nucleus. Its function is as follows. Probable transcriptional regulator involved in the development of the skeleton of the limb, vertebral column and head. Acts by controlling the number of mesenchymal precursor cells and chondrocytes. The polypeptide is T-box transcription factor TBX15 (Tbx15) (Mus musculus (Mouse)).